A 247-amino-acid polypeptide reads, in one-letter code: Probable 2-phosphosulfolactate phosphatase (247 aa).

Belongs to the ComB family. Mg(2+) is required as a cofactor.

It carries out the reaction (2R)-O-phospho-3-sulfolactate + H2O = (2R)-3-sulfolactate + phosphate. The polypeptide is Probable 2-phosphosulfolactate phosphatase (Clostridium perfringens (strain SM101 / Type A)).